The following is a 345-amino-acid chain: N-malonyltransferase FDB2 (345 aa).

Cys-110 acts as the Acyl-thioester intermediate in catalysis. The active-site Proton acceptor is His-158. Asp-173 is a catalytic residue.

The protein belongs to the arylamine N-acetyltransferase family.

Its pathway is xenobiotic degradation. Its function is as follows. N-malonyltransferase; part of the Fusarium detoxification of benzoxazolinone cluster 2 (FDB2) involved in the degradation of benzoxazolinones produced by the host plant. Maize, wheat, and rye produce the 2 benzoxazinone phytoanticipins 2,4-dihy-droxy-7-methoxy-1,4-benzoxazin-3-one (DIMBOA) and 2,4-dihydroxy-1,4-benzoxazin-3-one (DIBOA) that, due to their inherent instability once released, spontaneously degrade to the more stable corresponding benzoxazolinones, 6-methoxy-2-benzoxazolinone (MBOA) and 2-benzoxazolinone (BOA), respectively. The first step in the detoxification of benzoxazolinones involves the hydrolysis of the cyclic ester bond of benzoxazolinones by the FDB1 cluster gamma-lactamase MBL1 to aminophenols. MBL1 is able to convert BOA into 2-aminophenol (2-AP), as well as MBOA into 5-methoxy-2-aminophenol (2-AMP). The FDB2 cluster N-malonyltransferase FDB2/NAT1 then metabolizes aminophenols via N-malonylation to non-toxic malonamic acids. FDB2/NAT1 converts 2-AP into N-(2-hydroxyphenyl) malonamic acid (HPMA) and 2-AMP into N-(2-hydroxy-4-methoxyphenyl) malonamic acid (HMPMA). The duplicated dienlactone hydrolases DLH1 and DLH2 may provide redundant function for hydrolyzing the lactone moiety in the BOA molecule. The roles of the amidases an other enzymes encoded by the 2 FDB clusters have not been identified so far. This chain is N-malonyltransferase FDB2, found in Gibberella moniliformis (strain M3125 / FGSC 7600) (Maize ear and stalk rot fungus).